Here is a 467-residue protein sequence, read N- to C-terminus: MTIDIKDISEKDRNTVLHPFTQLKDFATGKLREPTIVETGKGIRIQDARGNQLIDGFAGLYCVNVGYGRTEVAEAISRQAYRLAYYHSYAAHTTDELAILSDRLVKMAPGKMSKVFYGMSGSDANETQAKLVWYYNNLRGKPTKKKIISRERGYHGCSVVSGSMTGMSFYHDHMDLPLPQICHTGVPHHYWGANPGETEREFSARRAAELDEMIETLGPDNVGAFIAEPVLGTGGITPPPEGYWEAIQAVLKKHDVLLIADEVITGFGRTGSMFGSQHYGIEPDLITVAKGLTSAYFPLSASIVGEKVYKVLEDGADRVGAFSHGYTYSGHPIGAAAANAVLDIVEKEDLPGNAREVGGYFQAQLKEKFAQLPIVGEVRGVGLMGAIEFVGDRENKKRFDPLLKVGARVSKAARDRGLIARAMPHGDILGFAPPLVTTKEEVDEIVAMAEKAVRSVMDELVRDGQKL.

An N6-(pyridoxal phosphate)lysine modification is found at Lys-290.

This sequence belongs to the class-III pyridoxal-phosphate-dependent aminotransferase family. It depends on pyridoxal 5'-phosphate as a cofactor.

This is an uncharacterized protein from Sinorhizobium fredii (strain NBRC 101917 / NGR234).